A 771-amino-acid chain; its full sequence is DnaJ homolog subfamily C member 16 (771 aa).

The signal sequence occupies residues 1–25 (MELKRLSISWQFLIVLVLILQSLSA). The Cytoplasmic portion of the chain corresponds to 26–532 (LDFDPYRVLG…ESLLHSNWRE (507 aa)). The J domain occupies 29–93 (DPYRVLGVSR…EKRTNYDHYG (65 aa)). Positions 116 to 244 (FYFDESFFHF…LRQFVESLLP (129 aa)) constitute a Thioredoxin domain. Residues 533–553 (MMPLLSLIFSALFILFGTVIV) form a helical; Anchor for type IV membrane protein membrane-spanning segment. At 554 to 771 (QAFSDSNEER…FYIPSWPELD (218 aa)) the chain is on the extracellular side. A disordered region spans residues 559–590 (SNEERESHPPDKEEVPEKAGKTEPSFTKESSS). The segment covering 560–579 (NEERESHPPDKEEVPEKAGK) has biased composition (basic and acidic residues). The N-linked (GlcNAc...) asparagine glycan is linked to N628.

It is found in the endoplasmic reticulum membrane. Its function is as follows. Plays an important role in regulating the size of autophagosomes during the formation process. The sequence is that of DnaJ homolog subfamily C member 16 (Dnajc16) from Rattus norvegicus (Rat).